The chain runs to 275 residues: Tryptophan synthase alpha chain (275 aa).

Residues glutamate 51 and aspartate 62 each act as proton acceptor in the active site.

The protein belongs to the TrpA family. In terms of assembly, tetramer of two alpha and two beta chains.

The catalysed reaction is (1S,2R)-1-C-(indol-3-yl)glycerol 3-phosphate + L-serine = D-glyceraldehyde 3-phosphate + L-tryptophan + H2O. Its pathway is amino-acid biosynthesis; L-tryptophan biosynthesis; L-tryptophan from chorismate: step 5/5. Functionally, the alpha subunit is responsible for the aldol cleavage of indoleglycerol phosphate to indole and glyceraldehyde 3-phosphate. The chain is Tryptophan synthase alpha chain from Methanopyrus kandleri (strain AV19 / DSM 6324 / JCM 9639 / NBRC 100938).